The following is a 459-amino-acid chain: Cysteine--tRNA ligase (459 aa).

Residue C31 participates in Zn(2+) binding. Positions 33–43 (PTVYYNPHIGN) match the 'HIGH' region motif. Zn(2+)-binding residues include C216, H241, and E245. The short motif at 274–278 (KMSKS) is the 'KMSKS' region element. K277 is an ATP binding site.

The protein belongs to the class-I aminoacyl-tRNA synthetase family. Monomer. Zn(2+) is required as a cofactor.

It is found in the cytoplasm. The catalysed reaction is tRNA(Cys) + L-cysteine + ATP = L-cysteinyl-tRNA(Cys) + AMP + diphosphate. The sequence is that of Cysteine--tRNA ligase from Rickettsia africae (strain ESF-5).